The following is a 278-amino-acid chain: 4-diphosphocytidyl-2-C-methyl-D-erythritol kinase (278 aa).

Lysine 9 is a catalytic residue. ATP is bound at residue 89 to 99 (PVASGIGGGSA). The active site involves aspartate 128.

It belongs to the GHMP kinase family. IspE subfamily.

The enzyme catalyses 4-CDP-2-C-methyl-D-erythritol + ATP = 4-CDP-2-C-methyl-D-erythritol 2-phosphate + ADP + H(+). Its pathway is isoprenoid biosynthesis; isopentenyl diphosphate biosynthesis via DXP pathway; isopentenyl diphosphate from 1-deoxy-D-xylulose 5-phosphate: step 3/6. Its function is as follows. Catalyzes the phosphorylation of the position 2 hydroxy group of 4-diphosphocytidyl-2C-methyl-D-erythritol. This chain is 4-diphosphocytidyl-2-C-methyl-D-erythritol kinase, found in Cereibacter sphaeroides (strain KD131 / KCTC 12085) (Rhodobacter sphaeroides).